The primary structure comprises 205 residues: Small ribosomal subunit protein uS4c (205 aa).

Residues 16 to 40 (GKLPSLTNKTSKKRKSPGQPATSFK) are disordered. The S4 RNA-binding domain occupies 93–161 (MRLDNIVHRI…IQKNIESKEL (69 aa)).

This sequence belongs to the universal ribosomal protein uS4 family. In terms of assembly, part of the 30S ribosomal subunit. Contacts protein S5. The interaction surface between S4 and S5 is involved in control of translational fidelity.

The protein localises to the plastid. Its subcellular location is the chloroplast. In terms of biological role, one of the primary rRNA binding proteins, it binds directly to 16S rRNA where it nucleates assembly of the body of the 30S subunit. Its function is as follows. With S5 and S12 plays an important role in translational accuracy. The chain is Small ribosomal subunit protein uS4c (rps4) from Euglena gracilis.